We begin with the raw amino-acid sequence, 237 residues long: Uridylate kinase (237 aa).

12–15 (KLSG) contacts ATP. Positions 20-25 (GENGFG) are involved in allosteric activation by GTP. Position 54 (Gly54) interacts with UMP. ATP is bound by residues Gly55 and Arg59. UMP-binding positions include Asp72 and 133–140 (TGNPYFST). Tyr166 and Asp169 together coordinate ATP.

This sequence belongs to the UMP kinase family. As to quaternary structure, homohexamer.

The protein localises to the cytoplasm. It carries out the reaction UMP + ATP = UDP + ADP. The protein operates within pyrimidine metabolism; CTP biosynthesis via de novo pathway; UDP from UMP (UMPK route): step 1/1. Allosterically activated by GTP. Inhibited by UTP. Its function is as follows. Catalyzes the reversible phosphorylation of UMP to UDP. The polypeptide is Uridylate kinase (Clostridium perfringens (strain SM101 / Type A)).